Consider the following 192-residue polypeptide: A-type ATP synthase subunit E (192 aa).

The disordered stretch occupies residues 1–66 (MSLDTVVEDI…QERDQKLSSA (66 aa)). A compositionally biased stretch (basic and acidic residues) spans 8–26 (EDIRDEARARADEIRSEGE). The span at 27–49 (ERAEEIIDEAEREADDIVDEAER) shows a compositional bias: acidic residues. The segment covering 50–66 (EAERKISQERDQKLSSA) has biased composition (basic and acidic residues).

The protein belongs to the V-ATPase E subunit family. As to quaternary structure, has multiple subunits with at least A(3), B(3), C, D, E, F, H, I and proteolipid K(x).

It is found in the cell membrane. Functionally, component of the A-type ATP synthase that produces ATP from ADP in the presence of a proton gradient across the membrane. This is A-type ATP synthase subunit E from Natronomonas pharaonis (strain ATCC 35678 / DSM 2160 / CIP 103997 / JCM 8858 / NBRC 14720 / NCIMB 2260 / Gabara) (Halobacterium pharaonis).